The sequence spans 626 residues: FAD-binding monooxygenase moxY (626 aa).

Low complexity predominate over residues 1–23; that stretch reads MAPFLSAHGESASSSSSSSPTPS. A disordered region spans residues 1-47; it reads MAPFLSAHGESASSSSSSSPTPSRHTRNQHVDYSTPGSTGYNIPQNT. Polar residues predominate over residues 31–47; that stretch reads VDYSTPGSTGYNIPQNT. FAD-binding positions include 96–99, 108–109, and Y114; these read TWLE and DI. 106–108 contributes to the NADP(+) binding site; it reads GCD. NADP(+)-binding positions include 243–249 and 266–267; these read SGASSIQ and RT.

This sequence belongs to the FAD-binding monooxygenase family. Requires FAD as cofactor.

It functions in the pathway mycotoxin biosynthesis. In terms of biological role, FAD-binding monooxygenase; part of the fragmented gene cluster that mediates the biosynthesis of dothistromin (DOTH), a polyketide toxin very similar in structure to the aflatoxin precursor, versicolorin B. The first step of the pathway is the conversion of acetate to norsolorinic acid (NOR) and requires the fatty acid synthase subunits hexA and hexB, as well as the polyketide synthase pksA. PksA combines a hexanoyl starter unit and 7 malonyl-CoA extender units to synthesize the precursor NOR. The hexanoyl starter unit is provided to the acyl-carrier protein (ACP) domain by the fungal fatty acid synthase hexA/hexB. The second step is the conversion of NOR to averantin (AVN) and requires the norsolorinic acid ketoreductase nor1, which catalyzes the dehydration of norsolorinic acid to form (1'S)-averantin. The cytochrome P450 monooxygenase avnA then catalyzes the hydroxylation of AVN to 5'hydroxyaverantin (HAVN). The next step is performed by adhA that transforms HAVN to averufin (AVF). Averufin might then be converted to hydroxyversicolorone by cypX and avfA. Hydroxyversicolorone is further converted versiconal hemiacetal acetate (VHA) by moxY. VHA is then the substrate for the versiconal hemiacetal acetate esterase est1 to yield versiconal (VAL). Versicolorin B synthase vbsA then converts VAL to versicolorin B (VERB) by closing the bisfuran ring. Then, the activity of the versicolorin B desaturase verB leads to versicolorin A (VERA). DotB, a predicted chloroperoxidase, may perform epoxidation of the A-ring of VERA. Alternatively, a cytochrome P450, such as cypX or avnA could catalyze this step. It is also possible that another, uncharacterized, cytochrome P450 enzyme is responsible for this step. Opening of the epoxide could potentially be achieved by the epoxide hydrolase epoA. However, epoA seems not to be required for DOTH biosynthesis, but other epoxide hydrolases may have the ability to complement this hydrolysis. Alternatively, opening of the epoxide ring could be achieved non-enzymatically. The next step is the deoxygenation of ring A to yield the 5,8-dihydroxyanthraquinone which is most likely catalyzed by the NADPH dehydrogenase encoded by ver1. The last stages of DOTH biosynthesis are proposed to involve hydroxylation of the bisfuran. OrdB and norB might have oxidative roles here. An alternative possibility is that cytochrome P450 monoogenases such as avnA and cypX might perform these steps in addition to previously proposed steps. This is FAD-binding monooxygenase moxY from Dothistroma septosporum (Red band needle blight fungus).